The chain runs to 433 residues: Histidinol dehydrogenase (433 aa).

Residues Tyr133, Gln194, and Asn217 each contribute to the NAD(+) site. Substrate is bound by residues Ser240, Gln262, and His265. Residues Gln262 and His265 each coordinate Zn(2+). Residues Glu330 and His331 each act as proton acceptor in the active site. Residues His331, Asp364, Glu418, and His423 each coordinate substrate. Asp364 contributes to the Zn(2+) binding site. A Zn(2+)-binding site is contributed by His423.

It belongs to the histidinol dehydrogenase family. Zn(2+) is required as a cofactor.

It catalyses the reaction L-histidinol + 2 NAD(+) + H2O = L-histidine + 2 NADH + 3 H(+). Its pathway is amino-acid biosynthesis; L-histidine biosynthesis; L-histidine from 5-phospho-alpha-D-ribose 1-diphosphate: step 9/9. Catalyzes the sequential NAD-dependent oxidations of L-histidinol to L-histidinaldehyde and then to L-histidine. The protein is Histidinol dehydrogenase of Hydrogenovibrio crunogenus (strain DSM 25203 / XCL-2) (Thiomicrospira crunogena).